Here is a 138-residue protein sequence, read N- to C-terminus: MALLPDKEKLLRNFLRCANWEEKYLYIIELGQRLTELRDEDRSPQNSIQGCQSQVWIVMRQNAHGIIELQGDSDAAIVKGLIAVVFILYDQMTPQDIVSFDVRPWFEKMALTQHLTPSRSQGLEAMIRAIRAKAAALS.

Cysteine 51 (cysteine persulfide intermediate) is an active-site residue.

Belongs to the SufE family. In terms of assembly, homodimer. Interacts with SufS.

It localises to the cytoplasm. The protein operates within cofactor biosynthesis; iron-sulfur cluster biosynthesis. Participates in cysteine desulfuration mediated by SufS. Cysteine desulfuration mobilizes sulfur from L-cysteine to yield L-alanine and constitutes an essential step in sulfur metabolism for biosynthesis of a variety of sulfur-containing biomolecules. Functions as a sulfur acceptor for SufS, by mediating the direct transfer of the sulfur atom from the S-sulfanylcysteine of SufS, an intermediate product of cysteine desulfuration process. In Shigella sonnei (strain Ss046), this protein is Cysteine desulfuration protein SufE.